Consider the following 947-residue polypeptide: Bifunctional glutamine synthetase adenylyltransferase/adenylyl-removing enzyme (947 aa).

The segment at methionine 1–glutamate 440 is adenylyl removase. Residues serine 450–valine 947 form an adenylyl transferase region.

The protein belongs to the GlnE family. Requires Mg(2+) as cofactor.

It carries out the reaction [glutamine synthetase]-O(4)-(5'-adenylyl)-L-tyrosine + phosphate = [glutamine synthetase]-L-tyrosine + ADP. The enzyme catalyses [glutamine synthetase]-L-tyrosine + ATP = [glutamine synthetase]-O(4)-(5'-adenylyl)-L-tyrosine + diphosphate. Functionally, involved in the regulation of glutamine synthetase GlnA, a key enzyme in the process to assimilate ammonia. When cellular nitrogen levels are high, the C-terminal adenylyl transferase (AT) inactivates GlnA by covalent transfer of an adenylyl group from ATP to specific tyrosine residue of GlnA, thus reducing its activity. Conversely, when nitrogen levels are low, the N-terminal adenylyl removase (AR) activates GlnA by removing the adenylyl group by phosphorolysis, increasing its activity. The regulatory region of GlnE binds the signal transduction protein PII (GlnB) which indicates the nitrogen status of the cell. The polypeptide is Bifunctional glutamine synthetase adenylyltransferase/adenylyl-removing enzyme (Salmonella newport (strain SL254)).